A 361-amino-acid chain; its full sequence is Phospho-N-acetylmuramoyl-pentapeptide-transferase (361 aa).

A run of 10 helical transmembrane segments spans residues 28-48 (LAII…IEFL), 74-94 (TMGG…LADL), 99-119 (IWIT…DDYA), 133-153 (SKLL…EYLD), 168-188 (LSLD…VGSS), 203-223 (VPIA…GNLI), 236-256 (TGEL…FLWF), 263-283 (VFMG…ISVI), 288-308 (IVLA…ILQV), and 338-358 (KVVI…LSSL).

The protein belongs to the glycosyltransferase 4 family. MraY subfamily. Requires Mg(2+) as cofactor.

The protein resides in the cell inner membrane. The enzyme catalyses UDP-N-acetyl-alpha-D-muramoyl-L-alanyl-gamma-D-glutamyl-meso-2,6-diaminopimeloyl-D-alanyl-D-alanine + di-trans,octa-cis-undecaprenyl phosphate = di-trans,octa-cis-undecaprenyl diphospho-N-acetyl-alpha-D-muramoyl-L-alanyl-D-glutamyl-meso-2,6-diaminopimeloyl-D-alanyl-D-alanine + UMP. The protein operates within cell wall biogenesis; peptidoglycan biosynthesis. Its function is as follows. Catalyzes the initial step of the lipid cycle reactions in the biosynthesis of the cell wall peptidoglycan: transfers peptidoglycan precursor phospho-MurNAc-pentapeptide from UDP-MurNAc-pentapeptide onto the lipid carrier undecaprenyl phosphate, yielding undecaprenyl-pyrophosphoryl-MurNAc-pentapeptide, known as lipid I. This Rickettsia africae (strain ESF-5) protein is Phospho-N-acetylmuramoyl-pentapeptide-transferase.